The chain runs to 111 residues: Disintegrin acostatin-alpha (111 aa).

A signal peptide spans 1 to 20 (MIQVLLVTLCLAVFPYQGSS). Positions 21-46 (IILESGNVNDYEVVYPRKVTALPKGA) are excised as a propeptide. The Disintegrin domain maps to 47–111 (IQPKNPCCDA…GDCPRKHFYA (65 aa)). Glutamine 48 carries the pyrrolidone carboxylic acid; in Disintegrin acostatin-alpha, processed form modification. 4 cysteine pairs are disulfide-bonded: cysteine 53/cysteine 76, cysteine 67/cysteine 73, cysteine 72/cysteine 97, and cysteine 85/cysteine 104. A Cell attachment site motif is present at residues 89–91 (RGD). Residues 110 to 111 (YA) constitute a propeptide that is removed on maturation.

The protein belongs to the disintegrin family. Dimeric disintegrin subfamily. Heterodimer with subunit beta; disulfide-linked. Expressed by the venom gland.

The protein localises to the secreted. Inhibits fibrinogen interaction with platelets. Acts by binding to alpha-IIb/beta-3 (ITGA2B/ITGB3) on the platelet surface and inhibits ADP-induced platelet aggregation in human platelet-rich plasma. This is Disintegrin acostatin-alpha from Agkistrodon contortrix contortrix (Southern copperhead).